The primary structure comprises 581 residues: A-type ATP synthase subunit A (581 aa).

234–241 (GPFGSGKT) provides a ligand contact to ATP.

It belongs to the ATPase alpha/beta chains family. Has multiple subunits with at least A(3), B(3), C, D, E, F, H, I and proteolipid K(x).

The protein localises to the cell membrane. The enzyme catalyses ATP + H2O + 4 H(+)(in) = ADP + phosphate + 5 H(+)(out). Its function is as follows. Component of the A-type ATP synthase that produces ATP from ADP in the presence of a proton gradient across the membrane. The A chain is the catalytic subunit. This is A-type ATP synthase subunit A from Archaeoglobus fulgidus (strain ATCC 49558 / DSM 4304 / JCM 9628 / NBRC 100126 / VC-16).